A 185-amino-acid chain; its full sequence is Large ribosomal subunit protein uL5 (185 aa).

It belongs to the universal ribosomal protein uL5 family. In terms of assembly, part of the 50S ribosomal subunit; part of the 5S rRNA/L5/L18/L25 subcomplex. Contacts the 5S rRNA and the P site tRNA. Forms a bridge to the 30S subunit in the 70S ribosome.

Its function is as follows. This is one of the proteins that bind and probably mediate the attachment of the 5S RNA into the large ribosomal subunit, where it forms part of the central protuberance. In the 70S ribosome it contacts protein S13 of the 30S subunit (bridge B1b), connecting the 2 subunits; this bridge is implicated in subunit movement. Contacts the P site tRNA; the 5S rRNA and some of its associated proteins might help stabilize positioning of ribosome-bound tRNAs. This chain is Large ribosomal subunit protein uL5, found in Rhizobium johnstonii (strain DSM 114642 / LMG 32736 / 3841) (Rhizobium leguminosarum bv. viciae).